An 84-amino-acid chain; its full sequence is Putative membrane protein insertion efficiency factor (84 aa).

Belongs to the UPF0161 family.

Its subcellular location is the cell inner membrane. Its function is as follows. Could be involved in insertion of integral membrane proteins into the membrane. The chain is Putative membrane protein insertion efficiency factor from Shewanella pealeana (strain ATCC 700345 / ANG-SQ1).